A 211-amino-acid chain; its full sequence is UPF0502 protein PC1_1804 (211 aa).

The interval 168 to 188 (SGDASDAAPEEEGAGDNSHQL) is disordered.

It belongs to the UPF0502 family.

This is UPF0502 protein PC1_1804 from Pectobacterium carotovorum subsp. carotovorum (strain PC1).